A 351-amino-acid polypeptide reads, in one-letter code: Ferredoxin--NADP reductase (351 aa).

Positions 44, 52, 57, 97, 132, 296, and 337 each coordinate FAD.

It belongs to the ferredoxin--NADP reductase type 2 family. As to quaternary structure, homodimer. Requires FAD as cofactor.

The enzyme catalyses 2 reduced [2Fe-2S]-[ferredoxin] + NADP(+) + H(+) = 2 oxidized [2Fe-2S]-[ferredoxin] + NADPH. This Paraburkholderia phymatum (strain DSM 17167 / CIP 108236 / LMG 21445 / STM815) (Burkholderia phymatum) protein is Ferredoxin--NADP reductase.